The chain runs to 344 residues: Ribosomal RNA large subunit methyltransferase Cfr (344 aa).

E90 functions as the Proton acceptor in the catalytic mechanism. The Radical SAM core domain maps to 97-330 (KQGWESFCIS…ATVRTQFGSE (234 aa)). The cysteines at positions 104 and 335 are disulfide-linked. C111, C115, and C118 together coordinate [4Fe-4S] cluster. Residues 157 to 158 (GE), S188, 211 to 213 (SLH), and N292 each bind S-adenosyl-L-methionine. The S-methylcysteine intermediate role is filled by C335.

The protein belongs to the radical SAM superfamily. RlmN family. Cfr subfamily. [4Fe-4S] cluster is required as a cofactor.

It is found in the cytoplasm. The catalysed reaction is adenosine(2503) in 23S rRNA + 2 reduced [2Fe-2S]-[ferredoxin] + 2 S-adenosyl-L-methionine = 8-methyladenosine(2503) in 23S rRNA + 5'-deoxyadenosine + L-methionine + 2 oxidized [2Fe-2S]-[ferredoxin] + S-adenosyl-L-homocysteine. Functionally, specifically methylates position 8 of adenine 2503 in 23S rRNA. Confers resistance to some classes of antibiotics. The protein is Ribosomal RNA large subunit methyltransferase Cfr of Clostridium botulinum (strain Okra / Type B1).